The following is a 359-amino-acid chain: 3-dehydroquinate synthase (359 aa).

It belongs to the archaeal-type DHQ synthase family.

It carries out the reaction 2-amino-2,3,7-trideoxy-D-lyxo-hept-6-ulosonate + NAD(+) + H2O = 3-dehydroquinate + NH4(+) + NADH + H(+). Its function is as follows. Catalyzes the oxidative deamination and cyclization of 2-amino-3,7-dideoxy-D-threo-hept-6-ulosonic acid (ADH) to yield 3-dehydroquinate (DHQ), which is fed into the canonical shikimic pathway of aromatic amino acid biosynthesis. The polypeptide is 3-dehydroquinate synthase (Methanosphaera stadtmanae (strain ATCC 43021 / DSM 3091 / JCM 11832 / MCB-3)).